A 141-amino-acid chain; its full sequence is Hemoglobin subunit alpha (141 aa).

A Globin domain is found at 1–141 (VLSPADKSNV…VSTVLTSKYR (141 aa)). Phosphoserine is present on Ser3. N6-succinyllysine occurs at positions 7 and 11. An N6-acetyllysine; alternate modification is found at Lys16. The residue at position 16 (Lys16) is an N6-succinyllysine; alternate. Tyr24 carries the post-translational modification Phosphotyrosine. A Phosphoserine modification is found at Ser35. Lys40 carries the N6-succinyllysine modification. Position 49 is a phosphoserine (Ser49). His58 is a binding site for O2. His87 is a binding site for heme b. Ser102 is modified (phosphoserine). A Phosphothreonine modification is found at Thr108. Ser124 and Ser131 each carry phosphoserine. 2 positions are modified to phosphothreonine: Thr134 and Thr137. Position 138 is a phosphoserine (Ser138).

This sequence belongs to the globin family. In terms of assembly, heterotetramer of two alpha chains and two beta chains. As to expression, red blood cells.

Involved in oxygen transport from the lung to the various peripheral tissues. Functionally, hemopressin acts as an antagonist peptide of the cannabinoid receptor CNR1. Hemopressin-binding efficiently blocks cannabinoid receptor CNR1 and subsequent signaling. The chain is Hemoglobin subunit alpha (HBA) from Mico argentatus (Silvery marmoset).